We begin with the raw amino-acid sequence, 247 residues long: Adenosylcobinamide-GDP ribazoletransferase (247 aa).

5 consecutive transmembrane segments (helical) span residues 34-54, 57-77, 113-133, 138-158, and 194-214; these read IITF…VFMV, AWCG…LMTG, GGLA…ELAL, ILAS…LLMY, and VLLL…AIFI.

The protein belongs to the CobS family. The cofactor is Mg(2+).

The protein resides in the cell inner membrane. It catalyses the reaction alpha-ribazole + adenosylcob(III)inamide-GDP = adenosylcob(III)alamin + GMP + H(+). The catalysed reaction is alpha-ribazole 5'-phosphate + adenosylcob(III)inamide-GDP = adenosylcob(III)alamin 5'-phosphate + GMP + H(+). Its pathway is cofactor biosynthesis; adenosylcobalamin biosynthesis; adenosylcobalamin from cob(II)yrinate a,c-diamide: step 7/7. In terms of biological role, joins adenosylcobinamide-GDP and alpha-ribazole to generate adenosylcobalamin (Ado-cobalamin). Also synthesizes adenosylcobalamin 5'-phosphate from adenosylcobinamide-GDP and alpha-ribazole 5'-phosphate. The chain is Adenosylcobinamide-GDP ribazoletransferase from Shigella flexneri.